A 213-amino-acid polypeptide reads, in one-letter code: tRNA (guanine-N(7)-)-methyltransferase (213 aa).

Positions 43, 68, 95, and 117 each coordinate S-adenosyl-L-methionine. Residues D153 and T190–E193 each bind substrate.

Belongs to the class I-like SAM-binding methyltransferase superfamily. TrmB family.

It catalyses the reaction guanosine(46) in tRNA + S-adenosyl-L-methionine = N(7)-methylguanosine(46) in tRNA + S-adenosyl-L-homocysteine. Its pathway is tRNA modification; N(7)-methylguanine-tRNA biosynthesis. In terms of biological role, catalyzes the formation of N(7)-methylguanine at position 46 (m7G46) in tRNA. The sequence is that of tRNA (guanine-N(7)-)-methyltransferase from Desulfitobacterium hafniense (strain DSM 10664 / DCB-2).